Reading from the N-terminus, the 750-residue chain is Photosystem I P700 chlorophyll a apoprotein A1 (750 aa).

The next 8 helical transmembrane spans lie at 70–93 (VFSA…FHGA), 156–179 (LYCT…FHYH), 195–219 (LNHH…HVSL), 291–309 (IAHH…GHMY), 346–369 (WHAQ…HHMY), 385–411 (LSLF…IFMV), 433–455 (AIIS…LYIH), and 531–549 (FLVH…LILL). 2 residues coordinate [4Fe-4S] cluster: cysteine 573 and cysteine 582. Transmembrane regions (helical) follow at residues 589-610 (HVFL…HFSW) and 664-686 (LSAY…MFLF). Histidine 675 provides a ligand contact to chlorophyll a'. 2 residues coordinate chlorophyll a: methionine 683 and tyrosine 691. Tryptophan 692 lines the phylloquinone pocket. The chain crosses the membrane as a helical span at residues 724–744 (AVGVTHYLLGGIATTWAFFLA).

Belongs to the PsaA/PsaB family. The PsaA/B heterodimer binds the P700 chlorophyll special pair and subsequent electron acceptors. PSI consists of a core antenna complex that captures photons, and an electron transfer chain that converts photonic excitation into a charge separation. The eukaryotic PSI reaction center is composed of at least 11 subunits. It depends on P700 is a chlorophyll a/chlorophyll a' dimer, A0 is one or more chlorophyll a, A1 is one or both phylloquinones and FX is a shared 4Fe-4S iron-sulfur center. as a cofactor.

It localises to the plastid. The protein localises to the chloroplast thylakoid membrane. It catalyses the reaction reduced [plastocyanin] + hnu + oxidized [2Fe-2S]-[ferredoxin] = oxidized [plastocyanin] + reduced [2Fe-2S]-[ferredoxin]. PsaA and PsaB bind P700, the primary electron donor of photosystem I (PSI), as well as the electron acceptors A0, A1 and FX. PSI is a plastocyanin-ferredoxin oxidoreductase, converting photonic excitation into a charge separation, which transfers an electron from the donor P700 chlorophyll pair to the spectroscopically characterized acceptors A0, A1, FX, FA and FB in turn. Oxidized P700 is reduced on the lumenal side of the thylakoid membrane by plastocyanin. The protein is Photosystem I P700 chlorophyll a apoprotein A1 of Amborella trichopoda.